The sequence spans 159 residues: Ribosomal RNA large subunit methyltransferase H (159 aa).

Residues L76, G108, and 127–132 (FSKMTF) contribute to the S-adenosyl-L-methionine site.

The protein belongs to the RNA methyltransferase RlmH family. Homodimer.

Its subcellular location is the cytoplasm. It catalyses the reaction pseudouridine(1915) in 23S rRNA + S-adenosyl-L-methionine = N(3)-methylpseudouridine(1915) in 23S rRNA + S-adenosyl-L-homocysteine + H(+). Specifically methylates the pseudouridine at position 1915 (m3Psi1915) in 23S rRNA. This chain is Ribosomal RNA large subunit methyltransferase H, found in Bifidobacterium longum subsp. infantis (strain ATCC 15697 / DSM 20088 / JCM 1222 / NCTC 11817 / S12).